Consider the following 108-residue polypeptide: UPF0235 protein RPB_0109 (108 aa).

The protein belongs to the UPF0235 family.

The chain is UPF0235 protein RPB_0109 from Rhodopseudomonas palustris (strain HaA2).